The primary structure comprises 269 residues: Formamidopyrimidine-DNA glycosylase (269 aa).

Pro2 serves as the catalytic Schiff-base intermediate with DNA. Catalysis depends on Glu3, which acts as the Proton donor. The active-site Proton donor; for beta-elimination activity is the Lys57. 3 residues coordinate DNA: His90, Arg109, and Lys150. The FPG-type zinc finger occupies 235 to 269; sequence QVYGRKGEPCRVCGTPIVATKHAQRATFYCRQCQK. Arg259 functions as the Proton donor; for delta-elimination activity in the catalytic mechanism.

The protein belongs to the FPG family. In terms of assembly, monomer. It depends on Zn(2+) as a cofactor.

The catalysed reaction is Hydrolysis of DNA containing ring-opened 7-methylguanine residues, releasing 2,6-diamino-4-hydroxy-5-(N-methyl)formamidopyrimidine.. It carries out the reaction 2'-deoxyribonucleotide-(2'-deoxyribose 5'-phosphate)-2'-deoxyribonucleotide-DNA = a 3'-end 2'-deoxyribonucleotide-(2,3-dehydro-2,3-deoxyribose 5'-phosphate)-DNA + a 5'-end 5'-phospho-2'-deoxyribonucleoside-DNA + H(+). In terms of biological role, involved in base excision repair of DNA damaged by oxidation or by mutagenic agents. Acts as a DNA glycosylase that recognizes and removes damaged bases. Has a preference for oxidized purines, such as 7,8-dihydro-8-oxoguanine (8-oxoG). Has AP (apurinic/apyrimidinic) lyase activity and introduces nicks in the DNA strand. Cleaves the DNA backbone by beta-delta elimination to generate a single-strand break at the site of the removed base with both 3'- and 5'-phosphates. The sequence is that of Formamidopyrimidine-DNA glycosylase from Escherichia coli (strain K12 / MC4100 / BW2952).